Consider the following 561-residue polypeptide: Probable xyloglucan galactosyltransferase GT20 (561 aa).

Residues 1–31 (MVSKRKSRTSKTIEDSCIHLCSVFFRFLYYT) are Cytoplasmic-facing. A helical; Signal-anchor for type II membrane protein membrane pass occupies residues 32–52 (LPALFLFFFLLYLCLSFTTGI). The Lumenal portion of the chain corresponds to 53-561 (SYNNFHMCIF…LLKKINRSVV (509 aa)). N-linked (GlcNAc...) asparagine glycosylation is found at Asn87, Asn253, Asn277, Asn418, Asn421, and Asn557.

It belongs to the glycosyltransferase 47 family. Expressed in hydathodes.

The protein localises to the golgi apparatus membrane. In terms of biological role, functions in xyloglucan synthesis by adding side chains to the xylosylated glucan backbone. Involved in the galactosylation of hemicellulose xyloglucan. In Arabidopsis thaliana (Mouse-ear cress), this protein is Probable xyloglucan galactosyltransferase GT20.